A 492-amino-acid polypeptide reads, in one-letter code: N-succinylglutamate 5-semialdehyde dehydrogenase (492 aa).

Position 220-225 (220-225 (GSASTG)) interacts with NAD(+). Active-site residues include E243 and C277.

This sequence belongs to the aldehyde dehydrogenase family. AstD subfamily.

It catalyses the reaction N-succinyl-L-glutamate 5-semialdehyde + NAD(+) + H2O = N-succinyl-L-glutamate + NADH + 2 H(+). It functions in the pathway amino-acid degradation; L-arginine degradation via AST pathway; L-glutamate and succinate from L-arginine: step 4/5. In terms of biological role, catalyzes the NAD-dependent reduction of succinylglutamate semialdehyde into succinylglutamate. In Salmonella paratyphi C (strain RKS4594), this protein is N-succinylglutamate 5-semialdehyde dehydrogenase.